Here is a 655-residue protein sequence, read N- to C-terminus: MAAGVAAWLPFARAAAIGWMPVANCPMPLAPADKSKRQDELIVLNVSGRRFQTWRTTLERYPDTLLGSTEKEFFFNEDTKEYFFDRDPEVFRCVLNFYRTGKLHYPRYECISAYDDELAFYGILPEIIGDCCYEEYKDRKRENAERLMDDNDSENNQESMPSLSFRQTMWRAFENPHTSTLALVFYYVTGFFIAVSVITNVVETVPCGTVPGSKELPCGERYSVAFFCLDTACVMIFTVEYLLRLFAAPSRYRFIRSVMSIIDVVAIMPYYIGLVMTNNEDVSGAFVTLRVFRVFRIFKFSRHSQGLRILGYTLKSCASELGFLLFSLTMAIIIFATVMFYAEKGSSASKFTSIPASFWYTIVTMTTLGYGDMVPKTIAGKIFGSICSLSGVLVIALPVPVIVSNFSRIYHQNQRADKRRAQKKARLARIRVAKTGSSNAYLHSKRNGLLNEALELTGTPEEEHMGKTASLIESQHHHLLHCLEKTTGLSYLVDDPLLSVRTSTIKNHEFIDEQMFEQNCMESSMQNYPSTRSPSLSSHAGLTTTCCSRRSKKTTHLPNSNLPATRLRSMQELSTIHIQGSEQPSLTTSRSSLNLKADDGLRPNCKTSQITTAIISIPAPPALTPEGETRPPPASPGPNTNIPSIASNVVKVSVL.

The Cytoplasmic portion of the chain corresponds to 1–182 (MAAGVAAWLP…FENPHTSTLA (182 aa)). The tract at residues 6–21 (AAWLPFARAAAIGWMP) is interaction with KCNIP1 and KCNIP2. The segment at 70-78 (EKEFFFNED) is interaction with KCNIP1. Zn(2+)-binding residues include H104, C110, C131, and C132. At S153 the chain carries Phosphoserine. A helical transmembrane segment spans residues 183 to 204 (LVFYYVTGFFIAVSVITNVVET). Over 205 to 223 (VPCGTVPGSKELPCGERYS) the chain is Extracellular. Residues 224–246 (VAFFCLDTACVMIFTVEYLLRLF) traverse the membrane as a helical segment. The Cytoplasmic portion of the chain corresponds to 247–253 (AAPSRYR). The helical transmembrane segment at 254-277 (FIRSVMSIIDVVAIMPYYIGLVMT) threads the bilayer. The Extracellular portion of the chain corresponds to 278–283 (NNEDVS). The helical; Voltage-sensor transmembrane segment at 284 to 306 (GAFVTLRVFRVFRIFKFSRHSQG) threads the bilayer. The Cytoplasmic segment spans residues 307 to 318 (LRILGYTLKSCA). Residues 319–343 (SELGFLLFSLTMAIIIFATVMFYAE) traverse the membrane as a helical segment. Residues 344 to 352 (KGSSASKFT) are Extracellular-facing. An intramembrane region (helical) is located at residues 353–366 (SIPASFWYTIVTMT). K(+) contacts are provided by T367, L368, G369, and Y370. The short motif at 367–372 (TLGYGD) is the Selectivity filter element. The stretch at 367–374 (TLGYGDMV) is an intramembrane region. A helical membrane pass occupies residues 378-400 (IAGKIFGSICSLSGVLVIALPVP). At 401–655 (VIVSNFSRIY…ASNVVKVSVL (255 aa)) the chain is on the cytoplasmic side. T459 carries the phosphothreonine modification. The tract at residues 470–487 (SLIESQHHHLLHCLEKTT) is interaction with KCNIP1 and KCNIP2. The interval 472-487 (IESQHHHLLHCLEKTT) is mediates dendritic targeting. A Phosphoserine; by CaMK2D modification is found at S569. A Phosphoserine modification is found at S585. The tract at residues 618 to 644 (PAPPALTPEGETRPPPASPGPNTNIPS) is disordered.

This sequence belongs to the potassium channel family. D (Shal) (TC 1.A.1.2) subfamily. Kv4.3/KCND3 sub-subfamily. Homotetramer. Heterotetramer with KCND2. Associates with the regulatory subunits KCNIP3 and KCNIP4. Interacts with KCNE1, KCNE2, SCN1B and KCNAB1 and DLG1. Component of heteromultimeric potassium channels. Identified in potassium channel complexes containing KCND1, KCND2, KCND3, KCNIP1, KCNIP2, KCNIP3, KCNIP4, DPP6 and DPP10. Interacts with KCNIP1; each KCNIP1 monomer interacts with two adjacent KCND3 subunits, through both the N-terminal inactivation ball of a KCND3 subunit and a C-terminal helix from the adjacent KCND3 subunit, clamping them together; this interaction stabilizes the tetrameric form and modulates the channel gating kinetics namely channel activation and inactivation kinetics and rate of recovery from inactivation. Interacts with DPP6; this interaction modulates the channel gating kinetics namely channel activation and inactivation kinetics and rate of recovery from inactivation. Interacts with KCNIP2; each KCNIP2 monomer interacts with two adjacent KCND3 subunits, through both the N-terminal inactivation ball of a KCND3 subunit and a C-terminal helix from the adjacent KCND3 subunit, clamping them together; this interaction modulates the channel gating kinetics. Regulated through phosphorylation at Ser-569 by CaMK2D. As to expression, detected in carotid body chemoreceptor cells and in frontal cortex.

The protein localises to the cell membrane. It localises to the sarcolemma. It is found in the cell projection. Its subcellular location is the dendrite. It catalyses the reaction K(+)(in) = K(+)(out). Functionally, pore-forming (alpha) subunit of voltage-gated A-type potassium channels that mediates transmembrane potassium transport in excitable membranes, in brain and heart. In cardiomyocytes, may generate the transient outward potassium current I(To). In neurons, may conduct the transient subthreshold somatodendritic A-type potassium current (ISA). Kinetics properties are characterized by fast activation at subthreshold membrane potentials, rapid inactivation, and quick recovery from inactivation. Channel properties are modulated by interactions with regulatory subunits. Interaction with the regulatory subunits KCNIP1 or KCNIP2 modulates the channel gating kinetics namely channel activation and inactivation kinetics and rate of recovery from inactivation. Likewise, interaction with DPP6 modulates the channel gating kinetics namely channel activation and inactivation kinetics. This Oryctolagus cuniculus (Rabbit) protein is A-type voltage-gated potassium channel KCND3.